We begin with the raw amino-acid sequence, 214 residues long: Adenylate kinase (214 aa).

10–15 (GAGKGT) contributes to the ATP binding site. The interval 30 to 59 (STGDMLRAAVKAGSELGKQAKAIMDAGKLV) is NMP. AMP contacts are provided by residues T31, R36, 57–59 (KLV), 85–88 (GFPR), and Q92. The segment at 122 to 159 (GRRVHPGSGRVYHVKFNPPQVEGKDDVTGEDLMTRKDD) is LID. ATP contacts are provided by residues R123 and 132–133 (VY). AMP contacts are provided by R156 and R167. Q200 provides a ligand contact to ATP.

The protein belongs to the adenylate kinase family. In terms of assembly, monomer.

It localises to the cytoplasm. The catalysed reaction is AMP + ATP = 2 ADP. Its pathway is purine metabolism; AMP biosynthesis via salvage pathway; AMP from ADP: step 1/1. Functionally, catalyzes the reversible transfer of the terminal phosphate group between ATP and AMP. Plays an important role in cellular energy homeostasis and in adenine nucleotide metabolism. This chain is Adenylate kinase, found in Edwardsiella ictaluri (strain 93-146).